A 37-amino-acid chain; its full sequence is Large ribosomal subunit protein bL36c (37 aa).

It belongs to the bacterial ribosomal protein bL36 family.

It localises to the plastid. The protein localises to the chloroplast. In Chlamydomonas reinhardtii (Chlamydomonas smithii), this protein is Large ribosomal subunit protein bL36c (rpl36).